Consider the following 237-residue polypeptide: Probable transcriptional regulatory protein MCAP_0598 (237 aa).

It belongs to the TACO1 family.

Its subcellular location is the cytoplasm. The protein is Probable transcriptional regulatory protein MCAP_0598 of Mycoplasma capricolum subsp. capricolum (strain California kid / ATCC 27343 / NCTC 10154).